The following is a 171-amino-acid chain: 3-hydroxyanthranilate 3,4-dioxygenase (171 aa).

O2 is bound at residue Arg-45. Fe cation-binding residues include His-49, Glu-55, and His-93. Glu-55 provides a ligand contact to substrate. Residues Arg-97 and Glu-107 each coordinate substrate. 4 residues coordinate a divalent metal cation: Cys-122, Cys-125, Cys-159, and Cys-162.

This sequence belongs to the 3-HAO family. Requires Fe(2+) as cofactor.

The protein localises to the cytoplasm. It carries out the reaction 3-hydroxyanthranilate + O2 = (2Z,4Z)-2-amino-3-carboxymuconate 6-semialdehyde. It participates in cofactor biosynthesis; NAD(+) biosynthesis; quinolinate from L-kynurenine: step 3/3. Its function is as follows. Catalyzes the oxidative ring opening of 3-hydroxyanthranilate to 2-amino-3-carboxymuconate semialdehyde, which spontaneously cyclizes to quinolinate. The sequence is that of 3-hydroxyanthranilate 3,4-dioxygenase from Candida albicans (strain SC5314 / ATCC MYA-2876) (Yeast).